Consider the following 301-residue polypeptide: Probable alpha-L-glutamate ligase 1 (301 aa).

Residues 104–287 (LQLLSRKGIG…VTEPIVEYIE (184 aa)) form the ATP-grasp domain. ATP is bound by residues lysine 141, 178–179 (EY), aspartate 187, and 211–213 (RSN). Mg(2+)-binding residues include aspartate 248, glutamate 260, and asparagine 262. The Mn(2+) site is built by aspartate 248, glutamate 260, and asparagine 262.

This sequence belongs to the RimK family. Mg(2+) is required as a cofactor. It depends on Mn(2+) as a cofactor.

This Shewanella sp. (strain ANA-3) protein is Probable alpha-L-glutamate ligase 1.